The primary structure comprises 109 residues: uncharacterized protein (109 aa).

The disordered stretch occupies residues 77 to 98 (TRTGHAYPRFTRPSFPSCNRNG).

This is an uncharacterized protein from Homo sapiens (Human).